Reading from the N-terminus, the 295-residue chain is Phosphatidylglycerol--prolipoprotein diacylglyceryl transferase (295 aa).

The next 4 membrane-spanning stretches (helical) occupy residues 28–48, 69–89, 101–121, and 131–151; these read WYAL…VLAT, LLTW…VLFY, ILMV…VVIA, and IPKL…LLLG. Arg152 lines the a 1,2-diacyl-sn-glycero-3-phospho-(1'-sn-glycerol) pocket. The next 3 helical transmembrane spans lie at 195 to 215, 224 to 244, and 268 to 288; these read QLYE…WLVW, GLIT…VEFF, and GLTM…WFVL.

This sequence belongs to the Lgt family.

The protein resides in the cell inner membrane. It carries out the reaction L-cysteinyl-[prolipoprotein] + a 1,2-diacyl-sn-glycero-3-phospho-(1'-sn-glycerol) = an S-1,2-diacyl-sn-glyceryl-L-cysteinyl-[prolipoprotein] + sn-glycerol 1-phosphate + H(+). It functions in the pathway protein modification; lipoprotein biosynthesis (diacylglyceryl transfer). Its function is as follows. Catalyzes the transfer of the diacylglyceryl group from phosphatidylglycerol to the sulfhydryl group of the N-terminal cysteine of a prolipoprotein, the first step in the formation of mature lipoproteins. This chain is Phosphatidylglycerol--prolipoprotein diacylglyceryl transferase, found in Ruegeria pomeroyi (strain ATCC 700808 / DSM 15171 / DSS-3) (Silicibacter pomeroyi).